The sequence spans 82 residues: MKLTCVMIVAVLFLTAWTVVTAEPHSSNVLENLYLKAHHEMENPEASKLNTRDRCQRANFVCDAFHHAAVCCEGVCVLVCAW.

The signal sequence occupies residues 1-22; the sequence is MKLTCVMIVAVLFLTAWTVVTA. Residues 23-53 constitute a propeptide that is removed on maturation; sequence EPHSSNVLENLYLKAHHEMENPEASKLNTRD. 3 disulfide bridges follow: cysteine 55–cysteine 72, cysteine 62–cysteine 76, and cysteine 71–cysteine 80.

Belongs to the conotoxin O1 superfamily. Expressed by the venom duct.

The protein resides in the secreted. The sequence is that of Conotoxin C11GB from Conus vexillum (Flag cone).